Here is a 404-residue protein sequence, read N- to C-terminus: uncharacterized protein (404 aa).

6 helical membrane passes run 37–57 (LLIL…FVQF), 92–112 (IYNV…FVLG), 122–142 (LLTL…SYIP), 188–208 (MFYA…ILII), 230–250 (IGGI…TIGT), and 272–292 (AFFL…LGIF).

It localises to the cell membrane. This is an uncharacterized protein from Mycoplasma pneumoniae (strain ATCC 29342 / M129 / Subtype 1) (Mycoplasmoides pneumoniae).